The following is a 401-amino-acid chain: Argininosuccinate synthase (401 aa).

8–16 (AYSGGLDTS) provides a ligand contact to ATP. Residue Tyr-87 coordinates L-citrulline. Gly-117 contacts ATP. Residues Thr-119, Asn-123, and Asp-124 each coordinate L-aspartate. Asn-123 contacts L-citrulline. Residues Arg-127, Ser-175, Glu-259, and Tyr-271 each contribute to the L-citrulline site.

This sequence belongs to the argininosuccinate synthase family. Type 1 subfamily. Homotetramer.

Its subcellular location is the cytoplasm. It catalyses the reaction L-citrulline + L-aspartate + ATP = 2-(N(omega)-L-arginino)succinate + AMP + diphosphate + H(+). It participates in amino-acid biosynthesis; L-arginine biosynthesis; L-arginine from L-ornithine and carbamoyl phosphate: step 2/3. The protein is Argininosuccinate synthase of Pseudarthrobacter chlorophenolicus (strain ATCC 700700 / DSM 12829 / CIP 107037 / JCM 12360 / KCTC 9906 / NCIMB 13794 / A6) (Arthrobacter chlorophenolicus).